The sequence spans 318 residues: CRISPR-associated protein Cas7/Csa2 1 (318 aa).

Belongs to the CRISPR-associated protein Cas7/Cst2/DevR family. Subtype I-a/Apern subfamily. As to quaternary structure, part of the aCascade ribonucleoprotein complex, minimally composed of Csa2 and Cas5a, which binds crRNA. Other possible components of aCascade in strain P1 are Cas6b (SSO1437) and Csa5 (SSO1443), while SSO1399, Cas5b (SSO1400) and SSO1401 have sometimes been seen weakly associated. Csa2 is probably the major RNA-binding subunit. The Csa2-Cas5a-crRNA complex also binds target DNA homologous to crRNA, probably forming an R-loop. Purified aCascade forms a filament about 6 nm in width.

CRISPR (clustered regularly interspaced short palindromic repeat) is an adaptive immune system that provides protection against mobile genetic elements (viruses, transposable elements and conjugative plasmids). CRISPR clusters contain spacers, sequences complementary to antecedent mobile elements, and target invading nucleic acids. CRISPR clusters are transcribed and processed into CRISPR RNA (crRNA). This is CRISPR-associated protein Cas7/Csa2 1 (cas7a) from Saccharolobus solfataricus (strain ATCC 35092 / DSM 1617 / JCM 11322 / P2) (Sulfolobus solfataricus).